Reading from the N-terminus, the 213-residue chain is MKLLLFITIAYLLGSIPTGLWIGQYFYHINLREHGSGNTGTTNTFRILGVKAGTATLAIDMFKGTLSILLPIIFGMTSISSIAIGFFAVLGHTFPIFANFKGGKAVATSAGVLLGFAPLYLFFLASIFVLVLYLFSMISLASVVSAIVGVLSVLTFPAIHFLLPNYDYFLTFIVILLAFIIIIRHKDNISRIKHHTENLIPWGLNLSKQVPKK.

5 helical membrane-spanning segments follow: residues 3–23 (LLLF…LWIG), 68–88 (ILLP…GFFA), 112–132 (VLLG…VLVL), 134–154 (LFSM…LSVL), and 163–183 (LPNY…IIII).

This sequence belongs to the PlsY family. In terms of assembly, probably interacts with PlsX.

Its subcellular location is the cell membrane. It carries out the reaction an acyl phosphate + sn-glycerol 3-phosphate = a 1-acyl-sn-glycero-3-phosphate + phosphate. It participates in lipid metabolism; phospholipid metabolism. Functionally, catalyzes the transfer of an acyl group from acyl-phosphate (acyl-PO(4)) to glycerol-3-phosphate (G3P) to form lysophosphatidic acid (LPA). This enzyme utilizes acyl-phosphate as fatty acyl donor, but not acyl-CoA or acyl-ACP. In Streptococcus pyogenes serotype M28 (strain MGAS6180), this protein is Glycerol-3-phosphate acyltransferase.